Here is a 107-residue protein sequence, read N- to C-terminus: MSAIQPPKPVERKIELEPHQILLKPLVTEKGVHRATRNNQYAFQIHRDATKLDVKKAVEHLFDVKVLKVRTQTRKGKARRFKYKIGRTSDWKKAIVSLHEDHRIDFF.

It belongs to the universal ribosomal protein uL23 family. In terms of assembly, part of the 50S ribosomal subunit. Contacts protein L29, and trigger factor when it is bound to the ribosome.

Its function is as follows. One of the early assembly proteins it binds 23S rRNA. One of the proteins that surrounds the polypeptide exit tunnel on the outside of the ribosome. Forms the main docking site for trigger factor binding to the ribosome. This chain is Large ribosomal subunit protein uL23, found in Rhodopirellula baltica (strain DSM 10527 / NCIMB 13988 / SH1).